A 318-amino-acid chain; its full sequence is Methionyl-tRNA formyltransferase (318 aa).

112–115 (SILP) serves as a coordination point for (6S)-5,6,7,8-tetrahydrofolate.

This sequence belongs to the Fmt family.

It carries out the reaction L-methionyl-tRNA(fMet) + (6R)-10-formyltetrahydrofolate = N-formyl-L-methionyl-tRNA(fMet) + (6S)-5,6,7,8-tetrahydrofolate + H(+). Functionally, attaches a formyl group to the free amino group of methionyl-tRNA(fMet). The formyl group appears to play a dual role in the initiator identity of N-formylmethionyl-tRNA by promoting its recognition by IF2 and preventing the misappropriation of this tRNA by the elongation apparatus. The chain is Methionyl-tRNA formyltransferase from Shewanella sp. (strain MR-4).